Consider the following 313-residue polypeptide: Olfactory receptor 5H1 (313 aa).

The Extracellular segment spans residues 1 to 28; it reads MEEENATLLTEFVLTGFLYQPQWKIPLF. Asparagine 5 carries an N-linked (GlcNAc...) asparagine glycan. The chain crosses the membrane as a helical span at residues 29-49; the sequence is LAFLVIYLITIMGNLGLIAVI. Over 50–56 the chain is Cytoplasmic; that stretch reads WKDPHLH. The helical transmembrane segment at 57–77 threads the bilayer; sequence IPMYLLLGNLAFVDAWISSTV. The Extracellular portion of the chain corresponds to 78-98; the sequence is TPKMLNNFLAKSKMISLSECK. The cysteines at positions 97 and 179 are disulfide-linked. The helical transmembrane segment at 99-119 threads the bilayer; the sequence is IQFFSFAISVTTECFLLATMA. Topologically, residues 120 to 143 are cytoplasmic; it reads YDRYVAICKPLLYPAIMTNGLCIR. Residues 144-164 traverse the membrane as a helical segment; the sequence is LLILSYVGGILHALIHEGFLF. The Extracellular segment spans residues 165 to 195; that stretch reads RLTFCNSNIVHHIYCDTIPLSKISCTDSSIN. A helical transmembrane segment spans residues 196 to 216; sequence FLMVFIFSGSIQVFSIVTILV. The Cytoplasmic segment spans residues 217 to 240; that stretch reads SYTFVLFAILKKKSDKGVRKAFST. A helical membrane pass occupies residues 241–261; sequence CGAHLFSVSLYYGPLLFIYVG. At 262 to 271 the chain is on the extracellular side; that stretch reads PASPQADDQD. The helical transmembrane segment at 272 to 292 threads the bilayer; the sequence is MVEPLFYTVIIPLLNPIIYSL. Over 293–313 the chain is Cytoplasmic; the sequence is RNKQVTVSFTKMLKKHVKVSY.

Belongs to the G-protein coupled receptor 1 family.

The protein resides in the cell membrane. Odorant receptor. This chain is Olfactory receptor 5H1 (OR5H1), found in Homo sapiens (Human).